The chain runs to 488 residues: MSGEMDKPLISRRLVDSDGSLAEVPKEAPKVGILGSGDFARSLATRLVGSGFSVVVGSRNPKRTAGLFPSLAQVTFQEEAVSSPEVIFVAVFREHYSSLCSLADQLAGKILVDVSNPTEKERLQHRQSNAEYLASLFPACTVVKAFNVISAWALQAGPRDGNRQVLICGDQLEAKHTVSEMARAMGFTPLDMGSLASAREVEAIPLRLLPSWKVPTLLALGLFVCFYAYNFIRDVLQPYIRKDENKFYKMPLSVVNTTLPCVAYVLLSLVYLPGVLAAALQLRRGTKYQRFPDWLDHWLQHRKQIGLLSFFFAMLHALYSFCLPLRRSHRYDLVNLAVKQVLANKSRLWVEEEVWRMEIYLSLGVLALGMLSLLAVTSIPSIANSLNWKEFSFVQSTLGFVALMLSTMHTLTYGWTRAFEENHYKFYLPPTFTLTLLLPCVIILAKGLFLLPCLSHRLTKIRRGWERDGAVKFMLPAGHTQGEKTSHV.

The Cytoplasmic segment spans residues 1–207 (MSGEMDKPLI…AREVEAIPLR (207 aa)). Phosphoserine is present on residues Ser11, Ser17, and Ser20. Residues 36-39 (SGDF), 58-59 (SR), 91-98 (VFREHYSS), Asn116, and Ala151 each bind NADP(+). FAD-binding residues include Trp152 and Asp160. Residues 208–228 (LLPSWKVPTLLALGLFVCFYA) traverse the membrane as a helical segment. Fe(3+) is bound at residue Tyr229. Residues 229–258 (YNFIRDVLQPYIRKDENKFYKMPLSVVNTT) are Vesicular-facing. An N-linked (GlcNAc...) asparagine glycan is attached at Asn256. The chain crosses the membrane as a helical span at residues 259–279 (LPCVAYVLLSLVYLPGVLAAA). Positions 259-407 (LPCVAYVLLS…LGFVALMLST (149 aa)) constitute a Ferric oxidoreductase domain. Residues 280 to 304 (LQLRRGTKYQRFPDWLDHWLQHRKQ) lie on the Cytoplasmic side of the membrane. Positions 281, 302, and 303 each coordinate FAD. The helical transmembrane segment at 305 to 325 (IGLLSFFFAMLHALYSFCLPL) threads the bilayer. His316 is a heme b binding site. Tyr319 contributes to the Fe(3+) binding site. Residues 326-358 (RRSHRYDLVNLAVKQVLANKSRLWVEEEVWRME) are Vesicular-facing. A helical membrane pass occupies residues 359-379 (IYLSLGVLALGMLSLLAVTSI). An FAD-binding site is contributed by Ser378. The Cytoplasmic segment spans residues 380–390 (PSIANSLNWKE). Residues 391–411 (FSFVQSTLGFVALMLSTMHTL) form a helical membrane-spanning segment. Gln395 lines the FAD pocket. A heme b-binding site is contributed by His409. Topologically, residues 412–433 (TYGWTRAFEENHYKFYLPPTFT) are vesicular. Residues 434-454 (LTLLLPCVIILAKGLFLLPCL) form a helical membrane-spanning segment. The Cytoplasmic portion of the chain corresponds to 455-488 (SHRLTKIRRGWERDGAVKFMLPAGHTQGEKTSHV). Position 486 is a phosphoserine (Ser486).

The protein belongs to the STEAP family. As to quaternary structure, homodimer. Interacts with BNIP3L, MYT1, RHBDL4/RHBDD1 and TCTP. It depends on FAD as a cofactor. Heme b is required as a cofactor. Proteolytically cleaved by RHBDL4/RHBDD1. RHBDL4/RHBDD1-induced cleavage occurs at multiple sites in a glycosylation-independent manner. Post-translationally, glycosylated.

Its subcellular location is the endosome membrane. It catalyses the reaction 2 Fe(2+) + NADP(+) + H(+) = 2 Fe(3+) + NADPH. The catalysed reaction is 2 Cu(+) + NADP(+) + H(+) = 2 Cu(2+) + NADPH. Functionally, integral membrane protein that functions as a NADPH-dependent ferric-chelate reductase, using NADPH from one side of the membrane to reduce a Fe(3+) chelate that is bound on the other side of the membrane. Mediates sequential transmembrane electron transfer from NADPH to FAD and onto heme, and finally to the Fe(3+) chelate. Can also reduce Cu(2+) to Cu(1+). Mediates efficient transferrin-dependent iron uptake in erythroid cells. May play a role downstream of p53/TP53 to interface apoptosis and cell cycle progression. Indirectly involved in exosome secretion by facilitating the secretion of proteins such as TCTP. The chain is Metalloreductase STEAP3 (Steap3) from Rattus norvegicus (Rat).